A 224-amino-acid polypeptide reads, in one-letter code: Flagellar L-ring protein (224 aa).

Positions 1-15 (MARYLLLASTLLLAA) are cleaved as a signal peptide. Cysteine 16 carries N-palmitoyl cysteine lipidation. The S-diacylglycerol cysteine moiety is linked to residue cysteine 16.

The protein belongs to the FlgH family. In terms of assembly, the basal body constitutes a major portion of the flagellar organelle and consists of four rings (L,P,S, and M) mounted on a central rod.

The protein resides in the cell outer membrane. It is found in the bacterial flagellum basal body. Functionally, assembles around the rod to form the L-ring and probably protects the motor/basal body from shearing forces during rotation. In Shewanella sp. (strain ANA-3), this protein is Flagellar L-ring protein.